A 336-amino-acid chain; its full sequence is Ketol-acid reductoisomerase (NADP(+)) 1 (336 aa).

Positions 2–181 (AKVYYEKDVT…GATRAGVLET (180 aa)) constitute a KARI N-terminal Rossmann domain. NADP(+) is bound by residues 25 to 28 (YGSQ), R48, S52, and 82 to 85 (DELQ). H107 is a catalytic residue. G133 lines the NADP(+) pocket. The KARI C-terminal knotted domain maps to 182 to 327 (TFKEETETDL…RKLREMMPFV (146 aa)). Positions 190, 194, 226, and 230 each coordinate Mg(2+). Substrate is bound at residue S251.

The protein belongs to the ketol-acid reductoisomerase family. The cofactor is Mg(2+).

The catalysed reaction is (2R)-2,3-dihydroxy-3-methylbutanoate + NADP(+) = (2S)-2-acetolactate + NADPH + H(+). It catalyses the reaction (2R,3R)-2,3-dihydroxy-3-methylpentanoate + NADP(+) = (S)-2-ethyl-2-hydroxy-3-oxobutanoate + NADPH + H(+). Its pathway is amino-acid biosynthesis; L-isoleucine biosynthesis; L-isoleucine from 2-oxobutanoate: step 2/4. The protein operates within amino-acid biosynthesis; L-valine biosynthesis; L-valine from pyruvate: step 2/4. In terms of biological role, involved in the biosynthesis of branched-chain amino acids (BCAA). Catalyzes an alkyl-migration followed by a ketol-acid reduction of (S)-2-acetolactate (S2AL) to yield (R)-2,3-dihydroxy-isovalerate. In the isomerase reaction, S2AL is rearranged via a Mg-dependent methyl migration to produce 3-hydroxy-3-methyl-2-ketobutyrate (HMKB). In the reductase reaction, this 2-ketoacid undergoes a metal-dependent reduction by NADPH to yield (R)-2,3-dihydroxy-isovalerate. This is Ketol-acid reductoisomerase (NADP(+)) 1 from Bacillus thuringiensis subsp. konkukian (strain 97-27).